Reading from the N-terminus, the 300-residue chain is MAETETNPLVVFATVATIIISFVTLYFFKQSAKSSTTSSSSSSSSKSKKGSPALIPDKFQKFPLISKTQVSHNSAIYRFGLPNPTDTLNLPIGQHISIGTIIDGKEVVRSYTPISLGDQQGHFDLLIKTYENGNISRHVAEKQVGDFVEIRGPKGFFTYTPNMKKSLGLIAGGTGIAPMYQIITAIMNNPEDKTKVHLLYANVTENDILLRDELEQYAKEHPDRLKIHHVLNEAPEGWQHLTGFVTPELIDKHLPKPSADTNLLLCGPPPMISAMKKAAVSLGFDKAKPVSKLGDQVFVF.

A helical transmembrane segment spans residues 8 to 28 (PLVVFATVATIIISFVTLYFF). Residues 34–45 (SSTTSSSSSSSS) are compositionally biased toward low complexity. The tract at residues 34-54 (SSTTSSSSSSSSKSKKGSPAL) is disordered. Positions 57-160 (DKFQKFPLIS…RGPKGFFTYT (104 aa)) constitute an FAD-binding FR-type domain. FAD contacts are provided by residues 140–155 (AEKQ…GPKG) and 166–198 (SLGL…KVHL).

It belongs to the flavoprotein pyridine nucleotide cytochrome reductase family. Monomer. Component of the 2-(3-amino-3-carboxypropyl)histidine synthase complex composed of DPH1, DPH2, DPH3 and a NADH-dependent reductase, predominantly CBR1. It depends on FAD as a cofactor.

It localises to the mitochondrion outer membrane. The enzyme catalyses 2 Fe(III)-[cytochrome b5] + NADH = 2 Fe(II)-[cytochrome b5] + NAD(+) + H(+). It catalyses the reaction 2 Fe(3+)-[Dph3] + NADH = 2 Fe(2+)-[Dph3] + NAD(+) + H(+). It participates in protein modification; peptidyl-diphthamide biosynthesis. NADH-dependent reductase for DPH3 and cytochrome b5. Required for the first step of diphthamide biosynthesis, a post-translational modification of histidine which occurs in elongation factor 2. DPH1 and DPH2 transfer a 3-amino-3-carboxypropyl (ACP) group from S-adenosyl-L-methionine (SAM) to a histidine residue, the reaction is assisted by a reduction system comprising DPH3 and a NADH-dependent reductase, predominantly CBR1. By reducing DPH3, also involved in the formation of the tRNA wobble base modification mcm5s 2U (5-methoxycarbonylmethyl-2-thiouridine), mediated by the elongator complex. The cytochrome b5/NADH cytochrome b5 reductase electron transfer system supports the catalytic activity of several sterol biosynthetic enzymes. The chain is NADH-cytochrome b5 reductase 1 (CBR1) from Lodderomyces elongisporus (strain ATCC 11503 / CBS 2605 / JCM 1781 / NBRC 1676 / NRRL YB-4239) (Yeast).